The sequence spans 543 residues: Lipoyl synthase, apicoplast (543 aa).

The first 63 residues, 1–63 (MAYFFDFPTD…LFSLLSASQS (63 aa)), serve as a signal peptide directing secretion. Residues cysteine 252, cysteine 257, cysteine 263, cysteine 278, cysteine 282, cysteine 285, and serine 493 each coordinate [4Fe-4S] cluster. One can recognise a Radical SAM core domain in the interval 264–482 (WNGGTATLIL…QDIAEEMGFK (219 aa)).

It belongs to the radical SAM superfamily. Lipoyl synthase family. [4Fe-4S] cluster is required as a cofactor.

The protein resides in the plastid. It is found in the apicoplast. The enzyme catalyses [[Fe-S] cluster scaffold protein carrying a second [4Fe-4S](2+) cluster] + N(6)-octanoyl-L-lysyl-[protein] + 2 oxidized [2Fe-2S]-[ferredoxin] + 2 S-adenosyl-L-methionine + 4 H(+) = [[Fe-S] cluster scaffold protein] + N(6)-[(R)-dihydrolipoyl]-L-lysyl-[protein] + 4 Fe(3+) + 2 hydrogen sulfide + 2 5'-deoxyadenosine + 2 L-methionine + 2 reduced [2Fe-2S]-[ferredoxin]. Its pathway is protein modification; protein lipoylation via endogenous pathway; protein N(6)-(lipoyl)lysine from octanoyl-[acyl-carrier-protein]: step 2/2. Catalyzes the radical-mediated insertion of two sulfur atoms into the C-6 and C-8 positions of the octanoyl moiety bound to the lipoyl domains of lipoate-dependent enzymes, thereby converting the octanoylated domains into lipoylated derivatives. In Toxoplasma gondii, this protein is Lipoyl synthase, apicoplast.